The following is a 60-amino-acid chain: MADLKITLIKSAAHRLPKQRAIVKSLGLGRVSSSVVKPNNEATRGAIFHIAHLVSVEEVK.

Belongs to the universal ribosomal protein uL30 family. As to quaternary structure, part of the 50S ribosomal subunit.

This Leuconostoc citreum (strain KM20) protein is Large ribosomal subunit protein uL30.